Consider the following 571-residue polypeptide: MEVTQTVKSYRIKKIEEIGKMTALSQEEIISNTKTVIQGLDTLKNEHNQILNSLLTSMKTIRKENGDTNLVEEKANILKKSVDSIELGLGEAQVMMALANHLQHTEAEKQKLRAQVRRLCQENAWLRDELANTQQKLQMSEQKVATIEEEKKHLEFMNEMKKYDTNEAQVNEEKESEQSSLDLGFPDDDDDGGQPEVLSPTQPSAMAQAASGGCEIPARLRTLHNLVIQYASQGRYEVAVPLCKQALEDLEKTSGHDHPDVATMLNILALVYRDQGKYKEAANLLNDALGIREKTLGPDHPAVAATLNNLAVLYGKRGKYKDAEPLCKRALVIREKVLGKDHPDVAKQLNNLALLCQNQGKYEEVERYYQRALEIYQKELGPDDPNVAKTKNNLASAYLKQGKYKQAEILYKEVLTRAHEKEFGKVDDDNKPIWMQAEEREENKAKYKDGAPQPDYGSWLKAVKVDSPTVTTTLKNLGALYRRQGKYEAAETLEECALRSRKSALEVVRQTKISDVLGSDFSKGQSPKDRKRSNSRDRNRRDSMDSVSYEKSGDGDEHEKSKLHVGTSHKQ.

Residues 54–160 adopt a coiled-coil conformation; it reads LLTSMKTIRK…KKHLEFMNEM (107 aa). The segment covering 167-177 has biased composition (basic and acidic residues); the sequence is EAQVNEEKESE. The tract at residues 167–210 is disordered; the sequence is EAQVNEEKESEQSSLDLGFPDDDDDGGQPEVLSPTQPSAMAQAA. TPR repeat units lie at residues 220–253, 262–295, 304–337, 346–379, 388–421, and 471–504; these read LRTLHNLVIQYASQGRYEVAVPLCKQALEDLEKT, ATMLNILALVYRDQGKYKEAANLLNDALGIREKT, AATLNNLAVLYGKRGKYKDAEPLCKRALVIREKV, AKQLNNLALLCQNQGKYEEVERYYQRALEIYQKE, AKTKNNLASAYLKQGKYKQAEILYKEVLTRAHEK, and TTTLKNLGALYRRQGKYEAAETLEECALRSRKSA. Residues 518-571 form a disordered region; it reads GSDFSKGQSPKDRKRSNSRDRNRRDSMDSVSYEKSGDGDEHEKSKLHVGTSHKQ. 2 stretches are compositionally biased toward basic and acidic residues: residues 526–544 and 551–562; these read SPKDRKRSNSRDRNRRDSM and KSGDGDEHEKSK.

It belongs to the kinesin light chain family. Oligomeric complex composed of two heavy chains and two light chains.

It is found in the cytoplasm. The protein resides in the cytoskeleton. Kinesin is a microtubule-associated force-producing protein that may play a role in organelle transport. The light chain may function in coupling of cargo to the heavy chain or in the modulation of its ATPase activity. The protein is Kinesin light chain of Doryteuthis pealeii (Longfin inshore squid).